A 365-amino-acid chain; its full sequence is MALLLCFVLLCGVADFTSSLSITTPEQRIEKAKGETAYLPCKFTLEPEDQGPLDIEWLISPSDNQKVDQVIILYSGDKIYDNYYPDLKGRVHFTSNDVKSGDASINVTNLQLSDIGTYQCKVKKAPGVANRKFLLTVLVKPSGTRCFVDGSGEIGNDFKLKCEPKEGSLPLQYEWQKLSDSQKMPTPWLAEMTSPVISVKNASSEYSGTYSCTVQNRVGSDQCMLRLDVVPPSNRAGTIAGAVIGTLLALVLIGAILFCCHKKRREEKYEKEVHHDIREDVPPPKSRTSTARSYIGSNHSSLGSMSPSNMEGYSKTQYNQVPSEDFERAPQSPTLAPAKVAAPNLSRMGAVPVMIPAQSKDGSIV.

An N-terminal signal peptide occupies residues 1 to 19 (MALLLCFVLLCGVADFTSS). 2 Ig-like C2-type domains span residues 20-136 (LSIT…FLLT) and 141-228 (PSGT…LRLD). Residues 20–238 (LSITTPEQRI…VVPPSNRAGT (219 aa)) are Extracellular-facing. 3 cysteine pairs are disulfide-bonded: Cys41–Cys120, Cys146–Cys223, and Cys162–Cys212. Asn106 is a glycosylation site (N-linked (GlcNAc...) asparagine). The chain crosses the membrane as a helical span at residues 239-259 (IAGAVIGTLLALVLIGAILFC). 2 S-palmitoyl cysteine lipidation sites follow: Cys259 and Cys260. Residues 260–365 (CHKKRREEKY…PAQSKDGSIV (106 aa)) lie on the Cytoplasmic side of the membrane. Over residues 269 to 282 (YEKEVHHDIREDVP) the composition is skewed to basic and acidic residues. A disordered region spans residues 269–315 (YEKEVHHDIREDVPPPKSRTSTARSYIGSNHSSLGSMSPSNMEGYSK). Positions 286 to 315 (SRTSTARSYIGSNHSSLGSMSPSNMEGYSK) are enriched in polar residues. Phosphoserine occurs at positions 297, 304, 306, 323, 332, and 363. The PDZ-binding signature appears at 360–365 (KDGSIV).

As to quaternary structure, monomer. May form homodimer. Interacts with LNX, MAGI1, DLG4, PRKCABP, TJP1 and CTNNB1. Interacts with MPDZ; recruits MPDZ to intercellular contact sites. Interacts with JAML (homodimeric form). N-glycosylated. In terms of processing, palmitoylated on Cys-259 and/or Cys-260; required for proper localization to the plasma membrane. As to expression, expressed in heart, brain, spleen, lung, liver, muscle, kidney, testis, spleen and skeletal muscle.

It localises to the cell membrane. The protein resides in the basolateral cell membrane. Its subcellular location is the cell junction. It is found in the tight junction. The protein localises to the adherens junction. Component of the epithelial apical junction complex that may function as a homophilic cell adhesion molecule and is essential for tight junction integrity. Also involved in transepithelial migration of leukocytes through adhesive interactions with JAML a transmembrane protein of the plasma membrane of leukocytes. The interaction between both receptors also mediates the activation of gamma-delta T-cells, a subpopulation of T-cells residing in epithelia and involved in tissue homeostasis and repair. Upon epithelial CXADR-binding, JAML induces downstream cell signaling events in gamma-delta T-cells through PI3-kinase and MAP kinases. It results in proliferation and production of cytokines and growth factors by T-cells that in turn stimulate epithelial tissues repair. The sequence is that of Coxsackievirus and adenovirus receptor homolog (Cxadr) from Rattus norvegicus (Rat).